The chain runs to 81 residues: LYR motif-containing protein At3g19508 (81 aa).

It belongs to the complex I LYR family. LYRM9 subfamily.

In Arabidopsis thaliana (Mouse-ear cress), this protein is LYR motif-containing protein At3g19508.